We begin with the raw amino-acid sequence, 404 residues long: Proteasomal ubiquitin receptor ADRM1-B (404 aa).

One can recognise a Pru domain in the interval 17–130; that stretch reads SSSKYLVEFR…RKVNEYLNNP (114 aa). 3 disordered regions span residues 128-149, 195-258, and 376-404; these read NNPPMPGALGGSGSGSHELSAL, GSGG…TSPT, and FAKAMQSTSSQKERESSEKKEEEEDMSLD. The segment covering 195–247 has biased composition (low complexity); the sequence is GSGGPTTSSSSSSSRSQSAAVTPSSTTSSTRTTSAPVAPAAAPATTPSPAVSS. Over residues 248-258 the composition is skewed to polar residues; the sequence is NDGASAATSPT. Positions 278–390 constitute a DEUBAD domain; the sequence is TGEGGQQVDL…QSTSSQKERE (113 aa). A compositionally biased stretch (basic and acidic residues) spans 386 to 395; sequence QKERESSEKK.

It belongs to the ADRM1 family. In terms of assembly, component of the 19S proteasome regulatory particle complex. The 26S proteasome consists of a 20S core particle (CP) and two 19S regulatory subunits (RP).

It is found in the cytoplasm. Its subcellular location is the nucleus. Functionally, component of the 26S proteasome, a multiprotein complex involved in the ATP-dependent degradation of ubiquitinated proteins. This complex plays a key role in the maintenance of protein homeostasis by removing misfolded or damaged proteins, which could impair cellular functions, and by removing proteins whose functions are no longer required. Therefore, the proteasome participates in numerous cellular processes, including cell cycle progression, apoptosis, or DNA damage repair. Within the complex, functions as a proteasomal ubiquitin receptor. The chain is Proteasomal ubiquitin receptor ADRM1-B (adrm1-b) from Xenopus laevis (African clawed frog).